The following is a 179-amino-acid chain: FAD-dependent monooxygenase nscC (179 aa).

An N-terminal signal peptide occupies residues 1–21; it reads MGKQQETILIIGAGISGLATS. FAD is bound by residues Glu-35 and Ala-46. Asn-92 is a glycosylation site (N-linked (GlcNAc...) asparagine). FAD is bound at residue Arg-119. N-linked (GlcNAc...) asparagine glycosylation occurs at Asn-170.

It belongs to the paxM FAD-dependent monooxygenase family. The cofactor is FAD.

It participates in secondary metabolite biosynthesis. Functionally, FAD-dependent monooxygenase; part of the gene cluster that mediates the biosynthesis of neosartoricin B, a prenylated anthracenone that probably exhibits T-cell antiproliferative activity, suggestive of a physiological role as an immunosuppressive agent. The non-reducing polyketide synthase nscA probably synthesizes and cyclizes the decaketide backbone. The hydrolase nscB then mediates the product release through hydrolysis followed by spontaneous decarboxylation. The prenyltransferase nscD catalyzes the addition of the dimethylallyl group to the aromatic C5. The FAD-dependent monooxygenase nscC is then responsible for the stereospecific hydroxylation at C2. Neosartoricin B can be converted into two additional compounds neosartoricins C and D. Neosartoricin C is a spirocyclic compound that is cyclized through the attack of C3 hydroxyl on C14, followed by dehydration. On the other hand, neosartoricin D is a further cyclized compound in which attack of C2 on C14 in neosartoricin C results in the formation of the acetal-containing dioxabicyclo-octanone ring. Both of these compounds are novel and possibly represent related metabolites of the gene cluster. This Trichophyton equinum (strain ATCC MYA-4606 / CBS 127.97) (Horse ringworm fungus) protein is FAD-dependent monooxygenase nscC.